A 500-amino-acid polypeptide reads, in one-letter code: LEM protein 2 (500 aa).

The region spanning 1–45 is the LEM domain; sequence MVDVEKMSDAELRAELNVRGANVGPVTGTTRSLYEKKLKKLLSGG. Over 1–325 the chain is Nuclear; sequence MVDVEKMSDA…VKQTNIFNEA (325 aa). A disordered region spans residues 39–202; the sequence is KKLLSGGAKT…RRITSVPGLI (164 aa). Over residues 46-57 the composition is skewed to low complexity; the sequence is AKTPARPTVAKP. Residues 58–75 show a composition bias toward pro residues; it reads APKPTPKSAPAPKSPKSP. Over residues 77–89 the composition is skewed to low complexity; that stretch reads ARRSIPRAAATAA. Residues 103-122 are compositionally biased toward acidic residues; sequence EEMSDSDDDMRDDDDDDEEI. Composition is skewed to low complexity over residues 130-141 and 168-197; these read SSFRSANSTASS and NTPR…RITS. The helical transmembrane segment at 326–346 threads the bilayer; it reads IYFALYVILILFVVLGIAYAL. Topologically, residues 347 to 378 are perinuclear space; that stretch reads TTTHRPKTADFSGYWGVLKAAGRDSLNFFYNY. A helical membrane pass occupies residues 379–399; the sequence is AILPVVSLGIFVVLGAGIYFG. The Nuclear portion of the chain corresponds to 400 to 500; sequence HRKYKEAKEQ…WIGNQSQKRW (101 aa).

In terms of assembly, interacts with lmn-1. Interacts (via LEM domain and the C-terminal nuclear domain) with baf-1. Ubiquitous. High expression in germline and intestine.

It is found in the nucleus inner membrane. The protein resides in the nucleus envelope. Its subcellular location is the chromosome. Functionally, nuclear lamina-associated inner nuclear membrane protein that is involved in cell division, nuclear structure organization, maintenance of nuclear envelope integrity and nuclear envelope reformation after mitosis. In interphase cells, plays a role in anchoring and spatial arrangement of chromosome arms at the nuclear periphery, forming so-called lem-2 subdomains. Both arms of autosomes but only the left arm of the X chromosome are anchored in lem-2 subdomains; sequences bound by lem-2 are mainly repetitive chromosome sequences and inactive genes. Involved in chromosome segregation and cell division, probably via its interaction with the nuclear intermediate filament protein lmn-1, the main component of nuclear lamina. Required to organize the distribution of lmn-1, nuclear pore complexes (NPCs) and chromatin in mitotically active cells. Involved in the nuclear positioning and efficient anchoring of microtubule-organizing centers (MTOCs) to the nuclear envelope during mitosis as well as on maintaining correct nuclear morphology. Contributes to closure of nuclear envelope (NE) holes and prevents excess nuclear membranes after meiosis and mitosis. Together with emr-1, plays a role in baf-1 enrichment at the nuclear envelope in anaphase. Together with emr-1, involved in muscle cell attachment to hypodermal cells, as well as muscle cell location and sarcomere organization. May play a role in radiation-induced DNA damage repair response. In Caenorhabditis elegans, this protein is LEM protein 2 (lem-2).